Reading from the N-terminus, the 106-residue chain is Nucleoid-associated protein Smal_0858 (106 aa).

Positions I81–F106 are disordered.

Belongs to the YbaB/EbfC family. Homodimer.

It is found in the cytoplasm. The protein localises to the nucleoid. Functionally, binds to DNA and alters its conformation. May be involved in regulation of gene expression, nucleoid organization and DNA protection. This Stenotrophomonas maltophilia (strain R551-3) protein is Nucleoid-associated protein Smal_0858.